A 331-amino-acid polypeptide reads, in one-letter code: 7,8-didemethyl-8-hydroxy-5-deazariboflavin synthase (331 aa).

The Radical SAM core domain maps to 6–244 (ITFSKNAFLP…ADVAVQIPPN (239 aa)). [4Fe-4S] cluster-binding residues include Cys-20, Cys-24, and Cys-27.

It belongs to the radical SAM superfamily. CofG family. In terms of assembly, consists of two subunits, CofG and CofH. The cofactor is [4Fe-4S] cluster.

It catalyses the reaction 5-amino-5-(4-hydroxybenzyl)-6-(D-ribitylimino)-5,6-dihydrouracil + S-adenosyl-L-methionine = 7,8-didemethyl-8-hydroxy-5-deazariboflavin + 5'-deoxyadenosine + L-methionine + NH4(+) + H(+). It functions in the pathway cofactor biosynthesis; coenzyme F0 biosynthesis. In terms of biological role, catalyzes the radical-mediated synthesis of 7,8-didemethyl-8-hydroxy-5-deazariboflavin from 5-amino-5-(4-hydroxybenzyl)-6-(D-ribitylimino)-5,6-dihydrouracil. The chain is 7,8-didemethyl-8-hydroxy-5-deazariboflavin synthase from Methanoculleus marisnigri (strain ATCC 35101 / DSM 1498 / JR1).